The chain runs to 212 residues: Probable GTP-binding protein EngB (212 aa).

The 173-residue stretch at 38–210 (SLPEIAFVGK…KASLAKCIKP (173 aa)) folds into the EngB-type G domain. Residues 46 to 53 (GKSNVGKS), 73 to 77 (GRTRQ), 91 to 94 (DLPG), 158 to 161 (TKSD), and 189 to 191 (VSN) contribute to the GTP site. The Mg(2+) site is built by Ser-53 and Thr-75.

This sequence belongs to the TRAFAC class TrmE-Era-EngA-EngB-Septin-like GTPase superfamily. EngB GTPase family. Mg(2+) is required as a cofactor.

Its function is as follows. Necessary for normal cell division and for the maintenance of normal septation. In Rickettsia peacockii (strain Rustic), this protein is Probable GTP-binding protein EngB.